The primary structure comprises 347 residues: Cannabinoid receptor 2 (347 aa).

Over 1-33 (MEGCRETEVTNGSNGGLEFNPMKEYMILSSGQQ) the chain is Extracellular. Residue asparagine 11 is glycosylated (N-linked (GlcNAc...) asparagine). The chain crosses the membrane as a helical span at residues 34 to 59 (IAVAVLCTLMGLLSALENMAVLYIIL). At 60–71 (SSRRLRRKPSYL) the chain is on the cytoplasmic side. The helical transmembrane segment at 72 to 92 (FISSLAGADFLASVIFACNFV) threads the bilayer. Residues 93 to 104 (IFHVFHGVDSNA) are Extracellular-facing. The helical transmembrane segment at 105-129 (IFLLKIGSVTMTFTASVGSLLLTAV) threads the bilayer. Topologically, residues 130 to 149 (DRYLCLCYPPTYKALVTRGR) are cytoplasmic. Residues 150–172 (ALVALCVMWVLSALISYLPLMGW) form a helical membrane-spanning segment. Residues 173–188 (TCCPSPCSELFPLIPN) are Extracellular-facing. A helical membrane pass occupies residues 189–214 (DYLLGWLLFIAILFSGIIYTYGYVLW). Residues 215-246 (KAHRHVATLAEHQDRQVPGIARMRLDVRLAKT) lie on the Cytoplasmic side of the membrane. A helical membrane pass occupies residues 247–267 (LGLVLAVLLICWFPALALMGH). The Extracellular portion of the chain corresponds to 268–279 (SLVTTLSDQVKE). The helical transmembrane segment at 280 to 301 (AFAFCSMLCLVNSMVNPIIYAL) threads the bilayer. The Cytoplasmic portion of the chain corresponds to 302-347 (RSGEIRSAAQHCLIGWKKYLQGLGPEGKEEGPRSSVTETEADVKTT). The segment at 326 to 347 (PEGKEEGPRSSVTETEADVKTT) is disordered. Serine 335 and serine 336 each carry phosphoserine. The residue at position 338 (threonine 338) is a Phosphothreonine.

The protein belongs to the G-protein coupled receptor 1 family. As to expression, expressed by cells of hematopoietic origin. Expressed in skin in suprabasal layers and hair follicles, in brain by neurons and glial cells and by osteoblasts, osteocytes, osteoclasts (at protein level).

It localises to the cell membrane. It is found in the cell projection. The protein resides in the dendrite. Its subcellular location is the perikaryon. Its function is as follows. Heterotrimeric G protein-coupled receptor for endocannabinoid 2-arachidonoylglycerol mediating inhibition of adenylate cyclase. May function in inflammatory response, nociceptive transmission and bone homeostasis. This Mus musculus (Mouse) protein is Cannabinoid receptor 2 (Cnr2).